The chain runs to 134 residues: Ribonuclease VapC1 (134 aa).

Residues 4-123 (IIDTSIIIAL…LNVKDFKRIQ (120 aa)) form the PINc domain. Mg(2+)-binding residues include Asp6 and Asp97.

This sequence belongs to the PINc/VapC protein family. Mg(2+) serves as cofactor.

Its function is as follows. Toxic component of a type II toxin-antitoxin (TA) system. Has ssRNase activity. Upon expression in E.coli inhibits growth in liquid culture; this toxic effect is neutralized by coexpression with cognate antitoxin VapB1. Its RNase activity is partially inhibited in vitro by VapB1. The polypeptide is Ribonuclease VapC1 (Rickettsia felis (strain ATCC VR-1525 / URRWXCal2) (Rickettsia azadi)).